Consider the following 84-residue polypeptide: Delta-stichotoxin-Sgt3a (84 aa).

The N-terminal stretch at 1–19 (MAYLKIVLVALMLVVAVSA) is a signal peptide. Positions 20 to 33 (MRLSDQEDQDISVA) are excised as a propeptide. 3 disulfides stabilise this stretch: Cys-38-Cys-78, Cys-40-Cys-68, and Cys-61-Cys-79. A propeptide is located at residue Gly-84.

Belongs to the sea anemone sodium channel inhibitory toxin family. Type II subfamily.

It localises to the secreted. The protein resides in the nematocyst. Binds specifically to voltage-gated sodium channels (Nav), thereby delaying their inactivation during signal transduction. In Stichodactyla gigantea (Giant carpet anemone), this protein is Delta-stichotoxin-Sgt3a.